A 450-amino-acid polypeptide reads, in one-letter code: 3-phosphoshikimate 1-carboxyvinyltransferase (450 aa).

Residues Lys23, Ser24, and Arg28 each contribute to the 3-phosphoshikimate site. Phosphoenolpyruvate is bound at residue Lys23. Residues Gly96 and Arg124 each contribute to the phosphoenolpyruvate site. 3-phosphoshikimate is bound by residues Ser167, Ser168, Gln169, Ser196, Glu311, and His340. Position 169 (Gln169) interacts with phosphoenolpyruvate. The active-site Proton acceptor is Glu311. Positions 344, 385, and 410 each coordinate phosphoenolpyruvate. The tract at residues 426-450 (GQGWGYPQPRSGQRARRATGQGSGG) is disordered.

Belongs to the EPSP synthase family. Monomer.

Its subcellular location is the cytoplasm. The enzyme catalyses 3-phosphoshikimate + phosphoenolpyruvate = 5-O-(1-carboxyvinyl)-3-phosphoshikimate + phosphate. The protein operates within metabolic intermediate biosynthesis; chorismate biosynthesis; chorismate from D-erythrose 4-phosphate and phosphoenolpyruvate: step 6/7. Catalyzes the transfer of the enolpyruvyl moiety of phosphoenolpyruvate (PEP) to the 5-hydroxyl of shikimate-3-phosphate (S3P) to produce enolpyruvyl shikimate-3-phosphate and inorganic phosphate. The sequence is that of 3-phosphoshikimate 1-carboxyvinyltransferase from Mycobacterium bovis (strain ATCC BAA-935 / AF2122/97).